The primary structure comprises 247 residues: 5'-nucleotidase SurE (247 aa).

4 residues coordinate a divalent metal cation: aspartate 8, aspartate 9, serine 39, and asparagine 91.

It belongs to the SurE nucleotidase family. A divalent metal cation is required as a cofactor.

It localises to the cytoplasm. The catalysed reaction is a ribonucleoside 5'-phosphate + H2O = a ribonucleoside + phosphate. In terms of biological role, nucleotidase that shows phosphatase activity on nucleoside 5'-monophosphates. This chain is 5'-nucleotidase SurE, found in Aromatoleum aromaticum (strain DSM 19018 / LMG 30748 / EbN1) (Azoarcus sp. (strain EbN1)).